Here is a 323-residue protein sequence, read N- to C-terminus: Acetyl-coenzyme A carboxylase carboxyl transferase subunit alpha (323 aa).

Positions Arg39–Gln293 constitute a CoA carboxyltransferase C-terminal domain.

The protein belongs to the AccA family. Acetyl-CoA carboxylase is a heterohexamer composed of biotin carboxyl carrier protein (AccB), biotin carboxylase (AccC) and two subunits each of ACCase subunit alpha (AccA) and ACCase subunit beta (AccD).

It localises to the cytoplasm. The enzyme catalyses N(6)-carboxybiotinyl-L-lysyl-[protein] + acetyl-CoA = N(6)-biotinyl-L-lysyl-[protein] + malonyl-CoA. The protein operates within lipid metabolism; malonyl-CoA biosynthesis; malonyl-CoA from acetyl-CoA: step 1/1. Functionally, component of the acetyl coenzyme A carboxylase (ACC) complex. First, biotin carboxylase catalyzes the carboxylation of biotin on its carrier protein (BCCP) and then the CO(2) group is transferred by the carboxyltransferase to acetyl-CoA to form malonyl-CoA. The chain is Acetyl-coenzyme A carboxylase carboxyl transferase subunit alpha from Burkholderia orbicola (strain AU 1054).